We begin with the raw amino-acid sequence, 805 residues long: Transcription factor SFL1 (805 aa).

Residues 1-24 (MSHLVSSSLGTTTTATPTSRSPHT) show a composition bias toward low complexity. The tract at residues 1-110 (MSHLVSSSLG…NNNVSNNNST (110 aa)) is disordered. Residues 25-69 (NHSTPYNQNSITSNRSSPVPKNSVNSRIIPQTMNPPIDMKSNNIL) show a composition bias toward polar residues. Basic and acidic residues predominate over residues 71–85 (PEKDTDTSRGDHSES). Residues 86 to 110 (KASSISSASGTTTTNNNNVSNNNST) show a composition bias toward low complexity. A DNA-binding region spans residues 117–226 (FIHKLYDMLH…LKNIKRRSSK (110 aa)). 5 disordered regions span residues 273 to 336 (MQSP…NQSP), 438 to 483 (QSNF…VAPQ), 513 to 675 (REDS…PAPQ), 691 to 746 (HQKS…SENH), and 759 to 805 (VSEL…RKLE). The segment covering 295-310 (QQQQQQQQQQQQQQQQ) has biased composition (low complexity). 2 stretches are compositionally biased toward polar residues: residues 454 to 480 (HGNS…NLNV) and 533 to 556 (PSRN…NFNP). Low complexity predominate over residues 557–566 (QQSQSQSQVQ). 3 stretches are compositionally biased toward polar residues: residues 581–597 (ESTY…SQIL), 604–614 (VNHSPLVQQQQ), and 622–635 (NDSS…SSLP). A compositionally biased stretch (low complexity) spans 637 to 659 (TRPLSRQQQQQQQTLHHPSTTSS). A compositionally biased stretch (polar residues) spans 716 to 738 (PISSTAPTTMITSTSKPTSTSGA).

This sequence belongs to the HSF family.

It is found in the nucleus. Its function is as follows. Transcription factor that plays a role of repressor of filamentous growth and flocculation. Antagonizes functions of SFL2 and FLO8. Plays a role in the hyphal repression induced by secreted factors like dodecanol by competitors such as Pseudomonas aeruginosa and Burkholderia cenocepacia. The sequence is that of Transcription factor SFL1 (SFL1) from Candida albicans (strain SC5314 / ATCC MYA-2876) (Yeast).